A 373-amino-acid polypeptide reads, in one-letter code: Type II secretion system protein L (373 aa).

At 1-214 (MTAWRDTLGR…RRSDPMQRWN (214 aa)) the chain is on the cytoplasmic side. A helical membrane pass occupies residues 215 to 233 (LLLAVAALVLLAVAGWLLL). Topologically, residues 234-373 (DNRRQAADDL…AKEAADAAQR (140 aa)) are periplasmic.

Belongs to the GSP L family. As to quaternary structure, type II secretion system is composed of four main components: the outer membrane complex, the inner membrane complex, the cytoplasmic secretion ATPase and the periplasm-spanning pseudopilus. Forms homodimers. Interacts with XpsM/GspM. Interacts with XpsE/GspE and XpsF/GspF.

The protein resides in the cell inner membrane. In terms of biological role, inner membrane component of the type II secretion system required for the energy-dependent secretion of extracellular factors such as proteases and toxins from the periplasm. Plays a role in the complex assembly and recruits XpsM resulting in a stable complex in the inner membrane. Provides thus a link between the energy-providing XpsE protein in the cytoplasm and the rest of the T2SS machinery. This Xanthomonas campestris pv. campestris (strain ATCC 33913 / DSM 3586 / NCPPB 528 / LMG 568 / P 25) protein is Type II secretion system protein L (pefL).